Consider the following 745-residue polypeptide: Copper-transporting ATPase (745 aa).

In terms of domain architecture, HMA spans 1–67; sequence MKESFYIEGM…LIEKLGYSPK (67 aa). Over 1-83 the chain is Cytoplasmic; sequence MKESFYIEGM…KKEFFSPNVK (83 aa). Cu cation-binding residues include Cys12 and Cys15. Residues 84–104 traverse the membrane as a helical segment; it reads LALAVIFTLFVVYLSMGAMLS. Topologically, residues 105–124 are extracellular; it reads PSLLPESLLTINHHSNFLNA. The chain crosses the membrane as a helical span at residues 125-144; that stretch reads CLQLIGALIVMHLGRDFYIQ. The Cytoplasmic portion of the chain corresponds to 145 to 151; sequence GFKALWH. Residues 152-172 traverse the membrane as a helical segment; that stretch reads RQPNMSSLIAIGTSAALISSL. Residues 173-194 are Extracellular-facing; that stretch reads WQLYLVYTNHYTDQWSYGHYYF. Residues 195 to 215 traverse the membrane as a helical segment; that stretch reads ESVCVILMFVMVGKRIENVSK. At 216 to 343 the chain is on the cytoplasmic side; sequence DKALDAMQAL…KAEISRLADK (128 aa). The chain crosses the membrane as a helical span at residues 344 to 366; it reads VSSVFVPSVIAIAVLAFVVWLII. Topologically, residues 367–379 are extracellular; that stretch reads APKPDFWWNFRTA. Residues 380–397 form a helical membrane-spanning segment; the sequence is LEVFVSVLVISCPCALGL. The Cytoplasmic portion of the chain corresponds to 398–685; that stretch reads ATPMSILVAN…KLSQATIKNI (288 aa). Asp435 (4-aspartylphosphate intermediate) is an active-site residue. Asp631 and Asp635 together coordinate Mg(2+). Residues 686–705 form a helical membrane-spanning segment; sequence KENLFWAFCYNSVFIPLACG. Residues 706 to 716 lie on the Extracellular side of the membrane; it reads VLYKANIMLSP. The chain crosses the membrane as a helical span at residues 717 to 735; it reads AIAGLAMSLSSVSVVLNSQ. Residues 736 to 745 are Cytoplasmic-facing; sequence RLRNFKIKDH.

Belongs to the cation transport ATPase (P-type) (TC 3.A.3) family. Type IB subfamily.

The protein localises to the cell membrane. It catalyses the reaction Cu(2+)(in) + ATP + H2O = Cu(2+)(out) + ADP + phosphate + H(+). Probably involved in copper export. In Helicobacter pylori (strain J99 / ATCC 700824) (Campylobacter pylori J99), this protein is Copper-transporting ATPase (copA).